The sequence spans 462 residues: Glycine--tRNA ligase (462 aa).

Positions 100 and 174 each coordinate substrate. Residues Arg-206 to Glu-208, Phe-216 to Phe-221, Glu-290 to Leu-291, and Gly-334 to Arg-337 contribute to the ATP site. Phe-221–Glu-225 is a binding site for substrate. Glu-330–Gly-334 contributes to the substrate binding site.

This sequence belongs to the class-II aminoacyl-tRNA synthetase family. In terms of assembly, homodimer.

It localises to the cytoplasm. It carries out the reaction tRNA(Gly) + glycine + ATP = glycyl-tRNA(Gly) + AMP + diphosphate. Functionally, catalyzes the attachment of glycine to tRNA(Gly). This is Glycine--tRNA ligase from Ruminiclostridium cellulolyticum (strain ATCC 35319 / DSM 5812 / JCM 6584 / H10) (Clostridium cellulolyticum).